The primary structure comprises 432 residues: Asparagine--tRNA ligase (432 aa).

Belongs to the class-II aminoacyl-tRNA synthetase family. As to quaternary structure, homodimer.

The protein resides in the cytoplasm. It catalyses the reaction tRNA(Asn) + L-asparagine + ATP = L-asparaginyl-tRNA(Asn) + AMP + diphosphate + H(+). The polypeptide is Asparagine--tRNA ligase (Lactobacillus johnsonii (strain CNCM I-12250 / La1 / NCC 533)).